Consider the following 62-residue polypeptide: ATP synthase subunit J, mitochondrial (62 aa).

Residues 13-32 (IVKPLWPYAVGGVITFFLFA) form a helical membrane-spanning segment.

F-type ATP synthases have 2 components, the catalytic core F(1) and the membrane-embedded component F(0), linked together by a central stalk and a peripheral stalk. The central stalk, also called rotor shaft, is often seen as part of F(1). The peripheral stalk is seen as part of F(0). F(0) contains the membrane channel next to the rotor. F-type ATP synthases form dimers but each monomer functions independently in ATP generation. The dimer consists of 17 different polypeptides: ATP1 (subunit alpha, 3 molecules per monomer, part of F(1)), ATP2 (subunit beta, 3 copies per monomer, part of F(1)), ATP3 (subunit gamma, part of the central stalk), ATP4 (subunit b, part of the peripheral stalk), ATP5/OSCP (subunit 5/OSCP, part of the peripheral stalk), ATP6 (subunit a, part of the peripheral stalk), ATP7 (subunit d, part of the peripheral stalk), ATP8 (subunit 8, part of the peripheral stalk), OLI1 (subunit c, part of the rotor, 10 molecules per monomer), ATP14 (subunit h, part of the peripheral stalk), ATP15 (subunit epsilon, part of the central stalk), ATP16 (subunit delta, part of the central stalk), ATP17 (subunit f, part of the peripheral stalk), ATP18 (subunit i/j, part of the peripheral stalk), ATP19 (subunit k, dimer-specific, at interface between monomers), ATP20 (subunit g, at interface between monomers), TIM11 (subunit e, at interface between monomers).

Its subcellular location is the mitochondrion inner membrane. Mitochondrial membrane ATP synthase (F(1)F(0) ATP synthase or Complex V) produces ATP from ADP in the presence of a proton gradient across the membrane which is generated by electron transport complexes of the respiratory chain. F-type ATP synthases consist of two structural domains, F(1) - containing the extramembraneous catalytic core, and F(0) - containing the membrane proton channel, linked together by a central stalk and a peripheral stalk. During catalysis, ATP synthesis in the catalytic domain of F(1) is coupled via a rotary mechanism of the central stalk subunits to proton translocation. Part of the complex F(0) domain. Minor subunit located with subunit a/ATP6 in the membrane. In Yarrowia lipolytica (strain CLIB 122 / E 150) (Yeast), this protein is ATP synthase subunit J, mitochondrial.